We begin with the raw amino-acid sequence, 77 residues long: Translation initiation factor IF-1, chloroplastic (77 aa).

Residues 1–71 (MKEQKWIHEG…TRGRIIYRLR (71 aa)) form the S1-like domain.

Belongs to the IF-1 family. As to quaternary structure, component of the 30S ribosomal translation pre-initiation complex which assembles on the 30S ribosome in the order IF-2 and IF-3, IF-1 and N-formylmethionyl-tRNA(fMet); mRNA recruitment can occur at any time during PIC assembly.

The protein resides in the plastid. Its subcellular location is the chloroplast. In terms of biological role, one of the essential components for the initiation of protein synthesis. Stabilizes the binding of IF-2 and IF-3 on the 30S subunit to which N-formylmethionyl-tRNA(fMet) subsequently binds. Helps modulate mRNA selection, yielding the 30S pre-initiation complex (PIC). Upon addition of the 50S ribosomal subunit IF-1, IF-2 and IF-3 are released leaving the mature 70S translation initiation complex. This chain is Translation initiation factor IF-1, chloroplastic, found in Hedera helix (English ivy).